The sequence spans 287 residues: Cbb3-type cytochrome c oxidase subunit FixP (287 aa).

Residues 1–33 (MSQKHIDELSGVETTGHEWDGIQELNNPMPRWW) are Cytoplasmic-facing. The chain crosses the membrane as a helical span at residues 34-54 (IWTFYVTILWAIGYAIAYPAI). The Periplasmic segment spans residues 55-287 (PMITSATNGY…IFVHALGGGT (233 aa)). 2 consecutive Cytochrome c domains span residues 108 to 196 (FAIA…WGLT) and 203 to 284 (GLAA…HALG). Positions 121, 124, 125, 173, 216, 219, 220, and 261 each coordinate heme c.

The protein belongs to the CcoP / FixP family. As to quaternary structure, component of the cbb3-type cytochrome c oxidase at least composed of FixN, FixO, FixQ and FixP. The cofactor is heme c.

It is found in the cell inner membrane. It functions in the pathway energy metabolism; oxidative phosphorylation. C-type cytochrome. Part of the cbb3-type cytochrome c oxidase complex. FixP subunit is required for transferring electrons from donor cytochrome c via its heme groups to FixO subunit. From there, electrons are shuttled to the catalytic binuclear center of FixN subunit where oxygen reduction takes place. The complex also functions as a proton pump. This is Cbb3-type cytochrome c oxidase subunit FixP from Rhizobium etli (strain ATCC 51251 / DSM 11541 / JCM 21823 / NBRC 15573 / CFN 42).